The primary structure comprises 495 residues: Ectonucleoside triphosphate diphosphohydrolase 2 (495 aa).

The Cytoplasmic portion of the chain corresponds to 1 to 4 (MAGK). A helical membrane pass occupies residues 5–25 (LVSLVPPLLLAAVGLAGLLLL). At 26 to 462 (CVPTQDVREP…PGLRKGTHFS (437 aa)) the chain is on the extracellular side. Asn64 is a glycosylation site (N-linked (GlcNAc...) asparagine). A disulfide bridge links Cys75 with Cys99. Residue Asn129 is glycosylated (N-linked (GlcNAc...) asparagine). Glu165 acts as the Proton acceptor in catalysis. 204 to 208 (GASTQ) serves as a coordination point for ATP. Intrachain disulfides connect Cys242–Cys284 and Cys265–Cys310. 2 N-linked (GlcNAc...) asparagine glycosylation sites follow: Asn294 and Asn319. 2 disulfide bridges follow: Cys323/Cys328 and Cys377/Cys399. N-linked (GlcNAc...) asparagine glycans are attached at residues Asn378 and Asn443. Residues 463-483 (SWVALLLLFTVLILAALVLLL) form a helical membrane-spanning segment. The Cytoplasmic segment spans residues 484–495 (RQVRSAKSPGAL).

Belongs to the GDA1/CD39 NTPase family. Ca(2+) serves as cofactor. It depends on Mg(2+) as a cofactor.

The protein resides in the cell membrane. In terms of biological role, in the nervous system, could hydrolyze ATP and other nucleotides to regulate purinergic neurotransmission. Hydrolyzes ADP only to a marginal extent. This chain is Ectonucleoside triphosphate diphosphohydrolase 2 (Entpd2), found in Mus musculus (Mouse).